The chain runs to 211 residues: ATP phosphoribosyltransferase (211 aa).

This sequence belongs to the ATP phosphoribosyltransferase family. Short subfamily. Heteromultimer composed of HisG and HisZ subunits.

The protein localises to the cytoplasm. The enzyme catalyses 1-(5-phospho-beta-D-ribosyl)-ATP + diphosphate = 5-phospho-alpha-D-ribose 1-diphosphate + ATP. It participates in amino-acid biosynthesis; L-histidine biosynthesis; L-histidine from 5-phospho-alpha-D-ribose 1-diphosphate: step 1/9. Its function is as follows. Catalyzes the condensation of ATP and 5-phosphoribose 1-diphosphate to form N'-(5'-phosphoribosyl)-ATP (PR-ATP). Has a crucial role in the pathway because the rate of histidine biosynthesis seems to be controlled primarily by regulation of HisG enzymatic activity. This chain is ATP phosphoribosyltransferase, found in Pseudomonas putida (strain GB-1).